The chain runs to 450 residues: MNEILNTKDINAIGEFFIETWGCQMNEEDSEKLSGMLKKEGYIRTEERENADVIIFNTCCVRENAELKVYGNLGILKGLKSKNPNLIIAVTGCMMQQKGMAETIKKKFPFVDIIIGTHNLHNFPNYLNEVKKKDTSVLKIQEKEDSIIENMPIDRKNSMKAFVTIMYGCNNFCTYCIVPYVRGRERSRTPENIEDEIKKLISEGYKEITLLGQNVNSYGKDLEPKVTFAELLERVNTIDGLERVRFMTSHPKDLTDDVIEAIAKCDKLCEQIHLPVQSGSSEILKKMNRHYDREKYLDVVSKIKKLIPNVALSTDIIVGFPGETEKDFEETLSLVKEVEYDSAFTFLYSIRKGTPAAKFEDQVPEDVKHKRFNRLVEVVNEISAKKNKAYEGKIEEVLVEGTSKNDENKLMGRTRTGKLVNFIGDKDSIGKLVNVKIIKANSFSLTGEEI.

Residues 14–132 (GEFFIETWGC…FPNYLNEVKK (119 aa)) form the MTTase N-terminal domain. [4Fe-4S] cluster-binding residues include C23, C59, C93, C169, C173, and C176. The Radical SAM core domain occupies 155 to 385 (RKNSMKAFVT…VEVVNEISAK (231 aa)). Positions 388–450 (KAYEGKIEEV…NSFSLTGEEI (63 aa)) constitute a TRAM domain.

The protein belongs to the methylthiotransferase family. MiaB subfamily. As to quaternary structure, monomer. The cofactor is [4Fe-4S] cluster.

It is found in the cytoplasm. The enzyme catalyses N(6)-dimethylallyladenosine(37) in tRNA + (sulfur carrier)-SH + AH2 + 2 S-adenosyl-L-methionine = 2-methylsulfanyl-N(6)-dimethylallyladenosine(37) in tRNA + (sulfur carrier)-H + 5'-deoxyadenosine + L-methionine + A + S-adenosyl-L-homocysteine + 2 H(+). Its function is as follows. Catalyzes the methylthiolation of N6-(dimethylallyl)adenosine (i(6)A), leading to the formation of 2-methylthio-N6-(dimethylallyl)adenosine (ms(2)i(6)A) at position 37 in tRNAs that read codons beginning with uridine. The chain is tRNA-2-methylthio-N(6)-dimethylallyladenosine synthase from Clostridium botulinum (strain Okra / Type B1).